A 96-amino-acid polypeptide reads, in one-letter code: Large ribosomal subunit protein uL23 (96 aa).

Belongs to the universal ribosomal protein uL23 family. In terms of assembly, part of the 50S ribosomal subunit. Contacts protein L29, and trigger factor when it is bound to the ribosome.

Its function is as follows. One of the early assembly proteins it binds 23S rRNA. One of the proteins that surrounds the polypeptide exit tunnel on the outside of the ribosome. Forms the main docking site for trigger factor binding to the ribosome. The sequence is that of Large ribosomal subunit protein uL23 from Alkaliphilus oremlandii (strain OhILAs) (Clostridium oremlandii (strain OhILAs)).